We begin with the raw amino-acid sequence, 78 residues long: Small ribosomal subunit protein bS18 (78 aa).

The protein belongs to the bacterial ribosomal protein bS18 family. In terms of assembly, part of the 30S ribosomal subunit. Forms a tight heterodimer with protein bS6.

Functionally, binds as a heterodimer with protein bS6 to the central domain of the 16S rRNA, where it helps stabilize the platform of the 30S subunit. The polypeptide is Small ribosomal subunit protein bS18 (Thermobifida fusca (strain YX)).